Consider the following 333-residue polypeptide: MEKFIKINWTENKTKRINDFSTSFIVQPLEKGLATTLGTAIRRVLLSSISSVAPFAVKIKGVEHEFMAINKVTEDVPQILLRLRDIKIAYNPEIFEDGKIYKLSLKSNKEAGDIYAKDFILPIGAEIVNPGLLIATTAAANVLEIDVFVRAGRGYVDFEENKKYIDEIKTNLTSSISNGQYIAVDSNFSPIEKVSFSSSELNTSSVIVQEKLEMEIVTKGTIDAKNAIAQAAKILVAHLNIIGDVNSLNIKDIFEEGNTEKEHSKTQNILIQSLDLSIRSFNALKRANYTTVQQLEALSLDDLKNIKNLGEKSINEIVEKLEKYNVFLDKGEE.

Residues 1–246 (MEKFIKINWT…AHLNIIGDVN (246 aa)) form an alpha N-terminal domain (alpha-NTD) region. The interval 263-333 (HSKTQNILIQ…YNVFLDKGEE (71 aa)) is alpha C-terminal domain (alpha-CTD).

It belongs to the RNA polymerase alpha chain family. In terms of assembly, homodimer. The RNAP catalytic core consists of 2 alpha, 1 beta, 1 beta' and 1 omega subunit. When a sigma factor is associated with the core the holoenzyme is formed, which can initiate transcription.

The enzyme catalyses RNA(n) + a ribonucleoside 5'-triphosphate = RNA(n+1) + diphosphate. DNA-dependent RNA polymerase catalyzes the transcription of DNA into RNA using the four ribonucleoside triphosphates as substrates. The chain is DNA-directed RNA polymerase subunit alpha from Mycoplasma mobile (strain ATCC 43663 / 163K / NCTC 11711) (Mesomycoplasma mobile).